Here is a 126-residue protein sequence, read N- to C-terminus: Small ribosomal subunit protein uS12m (126 aa).

A compositionally biased stretch (polar residues) spans 1–11 (MATSNQMGANT). The interval 1–21 (MATSNQMGANTRSKKKKKNLK) is disordered. The segment covering 12-21 (RSKKKKKNLK) has biased composition (basic residues).

The protein belongs to the universal ribosomal protein uS12 family.

It localises to the mitochondrion. Its function is as follows. Protein S12 is involved in the translation initiation step. The polypeptide is Small ribosomal subunit protein uS12m (RPS12) (Bigelowiella natans (Pedinomonas minutissima)).